Here is a 7059-residue protein sequence, read N- to C-terminus: Replicase polyprotein 1ab (7059 aa).

The 143-residue stretch at 54–196 (PENHVMVDCR…PWVMYLRKCG (143 aa)) folds into the CoV Nsp1 globular domain. Positions 216-246 (FKVEDAYDLVHDEPKGKFSKKAYALIRGYRG) constitute a BetaCoV Nsp1 C-terminal domain. The CoV Nsp2 N-terminal domain occupies 250–519 (LLYVDQYGCD…LICKALYLDY (270 aa)). Zn(2+)-binding residues include Cys-392, Cys-397, Cys-413, and Cys-416. A C4 region spans residues 392–416 (CEQDLCDFKGWVPGNMIDGFACTTC). Residues 524–713 (CGNLHQRELL…AQAFRSGAKV (190 aa)) enclose the CoV Nsp2 middle domain. Positions 733–851 (RRRICLSGSK…LDQAWRVPCA (119 aa)) constitute a CoV Nsp2 C-terminal domain. The Ubiquitin-like 1 domain occupies 853–966 (RCVTFKEQPT…LYCAFTAPED (114 aa)). A compositionally biased stretch (acidic residues) spans 972-986 (ESGVEEDDVEGEETD). The segment at 972–1000 (ESGVEEDDVEGEETDLTVTSAGEPCVASE) is disordered. The Peptidase C16 1 domain maps to 1036–1274 (DLESVIQDYE…IAQLYGSCIT (239 aa)). The active-site For PL1-PRO activity is the Cys-1074. Cys-1151, Cys-1154, Cys-1177, and Cys-1179 together coordinate Zn(2+). A C4-type 1 zinc finger spans residues 1151–1179 (CIKCDLALKLKGLDAMFFYGDVVSHVCKC). Active-site for PL1-PRO activity residues include His-1225 and Asp-1236. One can recognise a Macro domain in the interval 1275-1435 (PNVCFVKGDI…LISKCQITAV (161 aa)). Residues 1491-1563 (DDARTFVQSN…VAQIKALFLD (73 aa)) form the DPUP domain. Residues 1562–1617 (LDKVDILLTVDGVNFTNRFVPVGESFGKSLGNVFCDGVNVTKHKCDINYKGKVFFQ) form the Ubiquitin-like 2 domain. Positions 1631-1892 (SSFNFDQKEL…KIEYKPDLSQ (262 aa)) constitute a Peptidase C16 2 domain. Residue Cys-1671 is the For PL2-PRO activity of the active site. Residues Cys-1749, Cys-1751, Cys-1783, and Cys-1785 each coordinate Zn(2+). Residues 1749–1785 (CKCGVKQEQRTGVDAVMHFGTLSREDLEIGYTVDCSC) form a C4-type 2 zinc finger. Catalysis depends on for PL2-PRO activity residues His-1828 and Asp-1842. Residues 1906-2007 (IKAQFKTFEK…TYFNRPLLVD (102 aa)) form the Nucleic acid-binding domain. The region spanning 2020-2169 (DDGGDISESD…ADNKVIYTTE (150 aa)) is the G2M domain. The next 3 membrane-spanning stretches (helical) occupy residues 2138-2158 (ISACFNFIKWLFVLLFGWIKI), 2199-2219 (ACIIATIFLLWFNFIYANVIF), and 2221-2241 (DFYLPKIGFLPTFVGKIVQWI). The HD1 stretch occupies residues 2138–2385 (ISACFNFIKW…ASFIKLFSLF (248 aa)). The 62-residue stretch at 2235 to 2296 (GKIVQWIKNT…AIDVVQYEAD (62 aa)) folds into the 3Ecto domain. 2 disulfide bridges follow: Cys-2251–Cys-2275 and Cys-2266–Cys-2272. 3 helical membrane passes run 2313–2333 (LIVSYALYTAWFYPLFALISI), 2343–2363 (LLMLSTLHWSVRLLVSLANML), and 2365–2385 (AHVFMRFYIIIASFIKLFSLF). A Y1 region spans residues 2383–2473 (SLFRHVAYGC…ELKRPIQPTD (91 aa)). The 368-residue stretch at 2383–2750 (SLFRHVAYGC…LTTPFSLKGG (368 aa)) folds into the CoV Nsp3 Y domain. Positions 2387, 2392, 2397, 2400, 2433, 2436, 2440, and 2443 each coordinate Zn(2+). Positions 2387-2400 (HVAYGCSKSGCLFC) are ZF1. A ZF2 region spans residues 2433 to 2443 (CSKHQWNCIDC). Residues 2474–2566 (VAYHTVTDVK…MVDKILITTA (93 aa)) form a Y2 region. The coV-Y stretch occupies residues 2474-2750 (VAYHTVTDVK…LTTPFSLKGG (277 aa)). Residues 2567–2649 (NTGTSVTETM…DSVMSAVSAG (83 aa)) form a Y3 region. The interval 2650 to 2750 (LELTDESCNN…LTTPFSLKGG (101 aa)) is Y4. The next 7 helical transmembrane spans lie at 2752–2772 (VFSYFVYVCFVLSLVCFIGLW), 2824–2844 (STFGLSYYSNSMACPIVVAVV), 3009–3029 (VFDLIYQLFKGLAQPVDFLAL), 3031–3051 (ASSIAGAILAVIVVLGFYYLI), 3063–3083 (IVFVNVIVWCVNFMMLFVFQV), 3090–3110 (VYAICYFYATLYFPSEISVIM), and 3115–3135 (LVMYGTIMPLWFCLLYISVVV). The segment at 2752–3135 (VFSYFVYVCF…FCLLYISVVV (384 aa)) is HD2. One can recognise a Nsp4C domain in the interval 3149-3246 (LGTSVRSDGT…TASVSTSFLQ (98 aa)). The region spanning 3247–3549 (SGIVKMVNPT…YQQLAGIKLQ (303 aa)) is the Peptidase C30 domain. Active-site for 3CL-PRO activity residues include His-3287 and Cys-3391. The segment at 3319 to 3775 (LSLTVMSYQM…IISCYWGLFS (457 aa)) is HD3. 7 consecutive transmembrane segments (helical) span residues 3558–3578 (GIVCWIMASTFLFSCIITAFV), 3588–3608 (TNMLSITFCALCVISLAMLLV), 3615–3635 (LTMYIIPVLFTLLYNNYLVVY), 3657–3677 (TYTDEVIYGMLLLIGMVFVTL), 3684–3704 (LFSFIMFVGRVISVVSLWYMG), 3711–3731 (ILLMLASLFGTYTWTTALSMA), and 3755–3775 (IVLVCYLFIGYIISCYWGLFS). Residues 3837 to 3925 (SKLTDVKCAN…DYAKDNTVLQ (89 aa)) enclose the RdRp Nsp7 cofactor domain. The RdRp Nsp8 cofactor domain occupies 3926–4122 (ALQSEFVNMA…HNEVSATVLQ (197 aa)). The Nsp9 ssRNA-binding domain occupies 4123–4232 (NNELMPAKLK…GTISSTVRLQ (110 aa)). Residues 4233–4370 (AGTATEYASN…CVSTDTTVQS (138 aa)) form the ExoN/MTase coactivator domain. Zn(2+) contacts are provided by Cys-4306, Cys-4309, His-4315, Cys-4322, Cys-4348, Cys-4351, Cys-4359, and Cys-4361. Zinc fingers lie at residues 4306–4322 (CIYCRARVEHPDVDGLC) and 4348–4361 (CQVCGFWRDGSCSC). Positions 4375–4630 (FLNRVRGTSV…DCELYVNNAY (256 aa)) constitute a NiRAN domain. Positions 4578 and 4587 each coordinate Mn(2+). A Nsp12 Interface domain is found at 4631–4729 (RLFDLVQYDF…MNMDVDTHRY (99 aa)). Positions 4660, 4666, 4671, 4675, and 4852 each coordinate Zn(2+). Residues 4730-5297 (RLSLKDLLLY…NMYLRSAVMQ (568 aa)) enclose the Nsp12 RNA-dependent RNA polymerase domain. Residues 4732 to 4946 (SLKDLLLYAA…HQKCLKSIAA (215 aa)) form a rdRp Fingers N-ter region. A rdRp Palm N-ter region spans residues 4947 to 4985 (TRGVPVVIGTTKFYGGWDDMLRRLIKDVDNPVLMGWDYP). In terms of domain architecture, RdRp catalytic spans 4977-5139 (PVLMGWDYPK…CYNSDYASKG (163 aa)). A rdRp Fingers C-ter region spans residues 4986–5044 (KCDRAMPNILRIVSSLVLARKHEACCSQSDRFYRLANECAQVLSEIVMCGGCYYVKPGG). Residues His-5007, Cys-5010, and Cys-5011 each coordinate Zn(2+). Positions 5045–5180 (TSSGDATTAF…NNGPHEFCSQ (136 aa)) are rdRp Palm C-ter. Residues Ser-5124, Asp-5125, and Asp-5126 contribute to the active site. A rdRp Thumb region spans residues 5181-5297 (HTMLVKMDGD…NMYLRSAVMQ (117 aa)). Residues 5298–5410 (SVGACVVCSS…DDFNRIASCK (113 aa)) form the CV ZBD domain. Zn(2+)-binding residues include Cys-5302, Cys-5305, Cys-5313, Cys-5316, Cys-5323, Cys-5326, His-5330, His-5336, Cys-5347, Cys-5352, Cys-5369, and His-5372. One can recognise a (+)RNA virus helicase ATP-binding domain in the interval 5553-5734 (SVLETFQNNV…MCCLGPDIFL (182 aa)). ATP is bound at residue 5578-5585 (GPPGTGKS). One can recognise a (+)RNA virus helicase C-terminal domain in the interval 5735–5904 (GTCYRCPKEI…VETRVQCSTN (170 aa)). The 216-residue stretch at 5971 to 6186 (LFITKEEAVK…RCLAVYDCFC (216 aa)) folds into the ExoN domain. Residues Asp-5989, Glu-5991, and Glu-6090 contribute to the active site. The Zn(2+) site is built by His-6156, Cys-6160, and His-6163. Catalysis depends on residues His-6167 and Asp-6172. Cys-6178 is a Zn(2+) binding site. Residues 6195–6421 (YPIISNELSI…NLWNTFTKLQ (227 aa)) form the N7-MTase domain. Residue 6230–6236 (DIGNPKA) participates in S-adenosyl-L-methionine binding. The segment at 6308–6322 (CNGGSLYVNKHAFHT) is gpppA-binding. Zn(2+) contacts are provided by Cys-6346, Cys-6367, Cys-6378, and His-6381. Positions 6422 to 6482 (SLENVVYNLV…NVAVELFAKR (61 aa)) constitute a Nsp15 N-terminal oligomerization domain. The region spanning 6483–6603 (SIRHHPELKL…FAVRKEGQDV (121 aa)) is the AV-Nsp11N/CoV-Nsp15M domain. The 140-residue stretch at 6653–6792 (TCRTDMEKDF…NDEKVMTFYP (140 aa)) folds into the NendoU domain. Active-site residues include His-6683, His-6698, Lys-6738, Lys-6841, Asp-6935, Lys-6971, and Glu-7004. A Nidovirus-type SAM-dependent 2'-O-MTase domain is found at 6797 to 7059 (ASDWKPGYSM…NSRLSWLVMP (263 aa)).

Belongs to the coronaviruses polyprotein 1ab family. In terms of assembly, interacts with host PHB and PHB2. As to quaternary structure, interacts with papain-like protease nsp3 and non-structural protein 6. Monomer. Homodimer. Only the homodimer shows catalytic activity. In terms of assembly, interacts with nsp8 and nsp12 to form the replication-transcription complex (RTC): nsp12, nsp7, two subunits of nsp8, and up to two subunits of nsp13. As to quaternary structure, interacts with nsp7, nsp13 and nsp12 to form the replication-transcription complex (RTC): nsp12, nsp7, two subunits of nsp8, and up to two subunits of nsp13. Interacts with nsp12. In terms of assembly, interacts with proofreading exoribonuclease nsp14 and 2'-O-methyltransferase nsp16; these interactions enhance nsp14 and nsp16 enzymatic activities. As to quaternary structure, interacts with nsp7 and nsp8 to form the replication-transcription complex (RTC): nsp12, nsp7, two subunits of nsp8, and up to two subunits of nsp13. Interacts with nsp9. Interacts with nsp8 to form the replication-transcription complex (RTC): nsp12, nsp7, two subunits of nsp8, and up to two subunits of nsp13. The cofactor is Mn(2+). It depends on Mg(2+) as a cofactor. In terms of processing, specific enzymatic cleavages in vivo by its own proteases yield mature proteins. 3CL-PRO and PL-PRO proteinases are autocatalytically processed.

It localises to the host membrane. The protein localises to the host cytoplasm. It is found in the host perinuclear region. Its subcellular location is the host endoplasmic reticulum-Golgi intermediate compartment. It carries out the reaction RNA(n) + a ribonucleoside 5'-triphosphate = RNA(n+1) + diphosphate. It catalyses the reaction ATP + H2O = ADP + phosphate + H(+). The enzyme catalyses Thiol-dependent hydrolysis of ester, thioester, amide, peptide and isopeptide bonds formed by the C-terminal Gly of ubiquitin (a 76-residue protein attached to proteins as an intracellular targeting signal).. The catalysed reaction is a 5'-end (N(7)-methyl 5'-triphosphoguanosine)-ribonucleoside in mRNA + S-adenosyl-L-methionine = a 5'-end (N(7)-methyl 5'-triphosphoguanosine)-(2'-O-methyl-ribonucleoside) in mRNA + S-adenosyl-L-homocysteine + H(+). It carries out the reaction uridylyl-uridylyl-ribonucleotide-RNA = a 3'-end uridylyl-2',3'-cyclophospho-uridine-RNA + a 5'-end dephospho-ribonucleoside-RNA. It catalyses the reaction a 5'-end diphospho-ribonucleoside in mRNA + GTP + H(+) = a 5'-end (5'-triphosphoguanosine)-ribonucleoside in mRNA + diphosphate. The enzyme catalyses a 5'-end (5'-triphosphoguanosine)-ribonucleoside in mRNA + S-adenosyl-L-methionine = a 5'-end (N(7)-methyl 5'-triphosphoguanosine)-ribonucleoside in mRNA + S-adenosyl-L-homocysteine. In terms of biological role, the replicase polyprotein of coronaviruses is a multifunctional protein: it contains the activities necessary for the transcription of negative stranded RNA, leader RNA, subgenomic mRNAs and progeny virion RNA as well as proteinases responsible for the cleavage of the polyprotein into functional products. Inhibits host translation by interacting with the 40S ribosomal subunit. The nsp1-40S ribosome complex further induces an endonucleolytic cleavage near the 5'UTR of host mRNAs, targeting them for degradation. Viral mRNAs are not susceptible to nsp1-mediated endonucleolytic RNA cleavage thanks to the presence of a 5'-end leader sequence and are therefore protected from degradation. By suppressing host gene expression, nsp1 facilitates efficient viral gene expression in infected cells and evasion from host immune response. Functionally, may play a role in the modulation of host cell survival signaling pathway by interacting with host PHB and PHB2. Indeed, these two proteins play a role in maintaining the functional integrity of the mitochondria and protecting cells from various stresses. Its function is as follows. Responsible for the cleavages located at the N-terminus of the replicase polyprotein. In addition, PL-PRO possesses a deubiquitinating/deISGylating activity and processes both 'Lys-48'- and 'Lys-63'-linked polyubiquitin chains from cellular substrates. Participates together with nsp4 in the assembly of virally-induced cytoplasmic double-membrane vesicles necessary for viral replication. Antagonizes innate immune induction of type I interferon by blocking the phosphorylation, dimerization and subsequent nuclear translocation of host IRF3. Also prevents host NF-kappa-B signaling. In terms of biological role, participates in the assembly of virally-induced cytoplasmic double-membrane vesicles necessary for viral replication. Cleaves the C-terminus of replicase polyprotein at 11 sites. Recognizes substrates containing the core sequence [ILMVF]-Q-|-[SGACN]. Also able to bind an ADP-ribose-1''-phosphate (ADRP). Functionally, plays a role in the initial induction of autophagosomes from host endoplasmic reticulum. Later, limits the expansion of these phagosomes that are no longer able to deliver viral components to lysosomes. Its function is as follows. Forms a hexadecamer with nsp8 (8 subunits of each) that may participate in viral replication by acting as a primase. Alternatively, may synthesize substantially longer products than oligonucleotide primers. In terms of biological role, forms a hexadecamer with nsp7 (8 subunits of each) that may participate in viral replication by acting as a primase. Alternatively, may synthesize substantially longer products than oligonucleotide primers. Forms a primer, NSP9-pU, which is utilized by the polymerase for the initiation of RNA chains. Interacts with ribosome signal recognition particle RNA (SRP). Together with NSP8, suppress protein integration into the cell membrane, thereby disrupting host immune defenses. Functionally, plays a pivotal role in viral transcription by stimulating both nsp14 3'-5' exoribonuclease and nsp16 2'-O-methyltransferase activities. Therefore plays an essential role in viral mRNAs cap methylation. Its function is as follows. RNA-directed RNA polymerase that catalyzes the transcription of viral genomic and subgenomic RNAs. Acts in complex with nsp7 and nsp8 to transcribe both the minus and positive strands of genomic RNA. The kinase-like NiRAN domain of NSP12 attaches one or more nucleotides to the amino terminus of NSP9, forming a covalent RNA-protein intermediate that serves as transcription/replication primer. Subgenomic RNAs (sgRNAs) are formed by discontinuous transcription: The polymerase has the ability to pause at transcription-regulating sequences (TRS) and jump to the leader TRS, resulting in a major deletion. This creates a series of subgenomic RNAs that are replicated, transcribed and translated. In addition, Nsp12 is a subunit of the viral RNA capping enzyme that catalyzes the RNA guanylyltransferase reaction for genomic and sub-genomic RNAs. Subsequently, the NiRAN domain transfers RNA to GDP, and forms the core cap structure GpppA-RNA. In terms of biological role, multi-functional protein with a zinc-binding domain in N-terminus displaying RNA and DNA duplex-unwinding activities with 5' to 3' polarity. Activity of helicase is dependent on magnesium. Plays a role in viral RNA synthesis through two distinct activities. The N7-guanine methyltransferase activity plays a role in the formation of the cap structure GpppA-RNA. The proofreading exoribonuclease reduces the sensitivity of the virus to RNA mutagens during replication. This activity acts on both ssRNA and dsRNA in a 3'-5' direction. Functionally, plays a role in viral transcription/replication and prevents the simultaneous activation of host cell dsRNA sensors, such as MDA5/IFIH1, OAS, and PKR. Acts by degrading the 5'-polyuridines generated during replication of the poly(A) region of viral genomic and subgenomic RNAs. Catalyzes a two-step reaction in which a 2'3'-cyclic phosphate (2'3'-cP) is first generated by 2'-O transesterification, which is then hydrolyzed to a 3'-phosphate (3'-P). If not degraded, poly(U) RNA would hybridize with poly(A) RNA tails and activate host dsRNA sensors. Its function is as follows. Methyltransferase that mediates mRNA cap 2'-O-ribose methylation to the 5'-cap structure of viral mRNAs. N7-methyl guanosine cap is a prerequisite for binding of nsp16. Therefore plays an essential role in viral mRNAs cap methylation which is essential to evade immune system. The polypeptide is Replicase polyprotein 1ab (rep) (Bos taurus (Bovine)).